A 778-amino-acid polypeptide reads, in one-letter code: DEK domain-containing chromatin-associated protein 4 (778 aa).

Disordered regions lie at residues 1–334 and 475–689; these read MGEE…RPVR and LVNE…PSDE. Residues 14 to 26 show a composition bias toward polar residues; that stretch reads ANGTSSLQKTSDA. Composition is skewed to basic and acidic residues over residues 40–95, 121–153, 165–185, and 209–243; these read EVQE…PEAD, AVMK…KLEG, EEKL…KVEN, and TNKG…TESK. Positions 191–300 form a coiled coil; it reads KEEALKEKNE…KEDIKKSNKR (110 aa). Acidic residues predominate over residues 244-286; sequence DENEDKEEEKEDEKEESMDDKEDEKEESNDDDKEDEKEESNDD. Composition is skewed to basic and acidic residues over residues 287 to 296 and 303 to 323; these read KEDKKEDIKK and GKTE…DIEP. The Nuclear localization signal 1 signature appears at 289–296; it reads DKKEDIKK. The Nuclear localization signal 2 signature appears at 489-496; the sequence is PKKSSPAA. Over residues 491-502 the composition is skewed to low complexity; that stretch reads KSSPAAGSSSSK. The stretch at 526 to 587 forms a coiled coil; that stretch reads DDESEEEKED…EESEEETKKK (62 aa). 2 stretches are compositionally biased toward acidic residues: residues 527-553 and 560-582; these read DESE…EENE and SEDE…ESEE. Residues 618 to 625 carry the Nuclear localization signal 3 motif; the sequence is PKKATQKR. The segment covering 621-631 has biased composition (basic residues); the sequence is ATQKRSAGKRK. The segment covering 678–689 has biased composition (basic and acidic residues); it reads KGKDKNKEPSDE. The DEK-C domain maps to 685-740; that stretch reads EPSDEELKTAIIDILKGVDFNTATFTDILKRLDAKFNISLASKKSSIKRMIQDELT. 2 DNA-binding regions span residues 703–717 and 732–736; these read DFNT…KRLD and KRMIQ. Residues 732-766 adopt a coiled-coil conformation; it reads KRMIQDELTKLADEAEDEEGEEEDAEHEEEEEKEK. Residues 741-778 are disordered; the sequence is KLADEAEDEEGEEEDAEHEEEEEKEKAKGSGGGEEVKA. Acidic residues predominate over residues 745 to 763; the sequence is EAEDEEGEEEDAEHEEEEE. Basic and acidic residues predominate over residues 764–778; the sequence is KEKAKGSGGGEEVKA.

In terms of assembly, interacts with DEK3.

It is found in the nucleus. The protein resides in the nucleolus. Functionally, chromatin-associated protein which contributes to the modulation of chromatin structure (such as super-helical structure of DNA) and function. Binds to chromatin of protein-coding genes throughout the genome to regulate nucleosome occupancy and chromatin accessibility, and to modulate the expression of target genes. In Arabidopsis thaliana (Mouse-ear cress), this protein is DEK domain-containing chromatin-associated protein 4.